Reading from the N-terminus, the 129-residue chain is uncharacterized protein (129 aa).

The chain crosses the membrane as a helical span at residues 8 to 24 (YLILFITIIAICSLFRI).

The protein resides in the membrane. This is an uncharacterized protein from Rickettsia prowazekii (strain Madrid E).